The sequence spans 675 residues: Methionine--tRNA ligase (675 aa).

Positions 15–25 (PYANGPIHLGH) match the 'HIGH' region motif. Cys146, Cys149, Cys159, and Cys162 together coordinate Zn(2+). The 'KMSKS' region signature appears at 332 to 336 (KMSKS). Residue Lys335 participates in ATP binding. One can recognise a tRNA-binding domain in the interval 573 to 675 (DFAKVDMRVA…SGAQPGMQVK (103 aa)).

It belongs to the class-I aminoacyl-tRNA synthetase family. MetG type 1 subfamily. In terms of assembly, homodimer. Zn(2+) serves as cofactor.

Its subcellular location is the cytoplasm. The enzyme catalyses tRNA(Met) + L-methionine + ATP = L-methionyl-tRNA(Met) + AMP + diphosphate. Functionally, is required not only for elongation of protein synthesis but also for the initiation of all mRNA translation through initiator tRNA(fMet) aminoacylation. The protein is Methionine--tRNA ligase of Photorhabdus laumondii subsp. laumondii (strain DSM 15139 / CIP 105565 / TT01) (Photorhabdus luminescens subsp. laumondii).